The following is a 197-amino-acid chain: Phospholipid hydroperoxide glutathione peroxidase (197 aa).

Ser40 carries the post-translational modification Phosphoserine. Sec73 is an active-site residue. Position 73 (Sec73) is a non-standard amino acid, selenocysteine. Residue Val78 is modified to Phosphoserine.

It belongs to the glutathione peroxidase family. As to quaternary structure, monomer. Has a tendency to form higher mass oligomers. Interacts with FUNDC1; this interaction promotes GPX4 recruitment into mitochondria through TOM/TIM complex where it is degraded by mitophagy. Present primarily in testis. Expressed in flagella of epididymal sperm. Isoform Cytoplasmic: Highly expressed in testis. Present in spermatogonia, spermatocyte and spermatid (at protein level).

It is found in the nucleus. The protein localises to the nucleolus. Its subcellular location is the mitochondrion. The protein resides in the cytoplasm. The catalysed reaction is a hydroperoxy polyunsaturated fatty acid + 2 glutathione = a hydroxy polyunsaturated fatty acid + glutathione disulfide + H2O. It catalyses the reaction 2 glutathione + H2O2 = glutathione disulfide + 2 H2O. It carries out the reaction tert-butyl hydroperoxide + 2 glutathione = tert-butanol + glutathione disulfide + H2O. The enzyme catalyses cumene hydroperoxide + 2 glutathione = 2-phenylpropan-2-ol + glutathione disulfide + H2O. The catalysed reaction is (9S)-hydroperoxy-(10E,12Z)-octadecadienoate + 2 glutathione = (9S)-hydroxy-(10E,12Z)-octadecadienoate + glutathione disulfide + H2O. It catalyses the reaction (13S)-hydroperoxy-(9Z,11E)-octadecadienoate + 2 glutathione = (13S)-hydroxy-(9Z,11E)-octadecadienoate + glutathione disulfide + H2O. It carries out the reaction (5S)-hydroperoxy-(6E,8Z,11Z,14Z)-eicosatetraenoate + 2 glutathione = (5S)-hydroxy-(6E,8Z,11Z,14Z)-eicosatetraenoate + glutathione disulfide + H2O. The enzyme catalyses (12R)-hydroperoxy-(5Z,8Z,10E,14Z)-eicosatetraenoate + 2 glutathione = (12R)-hydroxy-(5Z,8Z,10E,14Z)-eicosatetraenoate + glutathione disulfide + H2O. The catalysed reaction is (12S)-hydroperoxy-(5Z,8Z,10E,14Z)-eicosatetraenoate + 2 glutathione = (12S)-hydroxy-(5Z,8Z,10E,14Z)-eicosatetraenoate + glutathione disulfide + H2O. It catalyses the reaction (15S)-hydroperoxy-(5Z,8Z,11Z,13E)-eicosatetraenoate + 2 glutathione = (15S)-hydroxy-(5Z,8Z,11Z,13E)-eicosatetraenoate + glutathione disulfide + H2O. It carries out the reaction (5S)-hydroperoxy-(6E,8Z,11Z,14Z,17Z)-eicosapentaenoate + 2 glutathione = (5S)-hydroxy-(6E,8Z,11Z,14Z,17Z)-eicosapentaenoate + glutathione disulfide + H2O. The enzyme catalyses (12S)-hydroperoxy-(5Z,8Z,10E,14Z,17Z)-eicosapentaenoate + 2 glutathione = (12S)-hydroxy-(5Z,8Z,10E,14Z,17Z)-eicosapentaenoate + glutathione disulfide + H2O. The catalysed reaction is (15S)-hydroperoxy-(5Z,8Z,11Z,13E,17Z)-eicosapentaenoate + 2 glutathione = (15S)-hydroxy-(5Z,8Z,11Z,13E,17Z)-eicosapentaenoate + glutathione disulfide + H2O. It catalyses the reaction (15S)-hydroperoxy-(11Z,13E)-eicosadienoate + 2 glutathione = (15S)-hydroxy-(11Z,13E)-eicosadienoate + glutathione disulfide + H2O. It carries out the reaction (17S)-hydroperoxy-(4Z,7Z,10Z,13Z,15E,19Z)-docosahexaenoate + 2 glutathione = (17S)-hydroxy-(4Z,7Z,10Z,13Z,15E,19Z)-docosahexaenoate + glutathione disulfide + H2O. The enzyme catalyses a hydroperoxy-1,2-diacyl-glycero-3-phosphocholine + 2 glutathione = a hydroxy-1,2-diacyl-glycero-3-phosphocholine + glutathione disulfide + H2O. Essential antioxidant peroxidase that directly reduces phospholipid hydroperoxide even if they are incorporated in membranes and lipoproteins. Can also reduce fatty acid hydroperoxide, cholesterol hydroperoxide and thymine hydroperoxide. Plays a key role in protecting cells from oxidative damage by preventing membrane lipid peroxidation. Required to prevent cells from ferroptosis, a non-apoptotic cell death resulting from an iron-dependent accumulation of lipid reactive oxygen species. The presence of selenocysteine (Sec) versus Cys at the active site is essential for life: it provides resistance to overoxidation and prevents cells against ferroptosis. The presence of Sec at the active site is also essential for the survival of a specific type of parvalbumin-positive interneurons, thereby preventing against fatal epileptic seizures. May be required to protect cells from the toxicity of ingested lipid hydroperoxides. Required for normal sperm development and male fertility. Essential for maturation and survival of photoreceptor cells. Plays a role in a primary T-cell response to viral and parasitic infection by protecting T-cells from ferroptosis and by supporting T-cell expansion. Plays a role of glutathione peroxidase in platelets in the arachidonic acid metabolism. Reduces hydroperoxy ester lipids formed by a 15-lipoxygenase that may play a role as down-regulator of the cellular 15-lipoxygenase pathway. Can also reduce small soluble hydroperoxides such as H2O2, cumene hydroperoxide and tert-butyl hydroperoxide. Its function is as follows. Specifically able to suppress the production of leukotriene and prostaglandin in response to several stimuli by reducing fatty acid hydroperoxide. In terms of biological role, specifically required to prevent mitochondrial cell death by mediating reduction of cardiolipin hydroperoxide. Also required for normal sperm development and male fertility. Functionally, required for male fertility by stabilizing the condensed chromatin in sperm nuclei. This is Phospholipid hydroperoxide glutathione peroxidase from Rattus norvegicus (Rat).